The following is a 761-amino-acid chain: Translational repressor ifet-1 (761 aa).

Disordered stretches follow at residues 101–274 (SPQR…SSGG), 386–446 (KGME…QHLH), 557–592 (VQRQLQKSSSNADQKKEKTSQSPPESNQETSDAHNQ), 681–702 (QQAQMANMQERQGPSHNQQQHQ), and 730–761 (GSQFTGSGDRIPSSVRPMSLEDLEKQLTAVPK). Basic and acidic residues-rich tracts occupy residues 114–128 (PTDDKGRDGEYERLG), 164–189 (RGTRGAEWKKDTTRGAKFAPRREERL), and 212–222 (IELRGFDEPKK). 4 stretches are compositionally biased toward polar residues: residues 400-410 (QDPSQQAQLLQ), 557-568 (VQRQLQKSSSNA), 576-592 (SQSPPESNQETSDAHNQ), and 690-702 (ERQGPSHNQQQHQ).

Interacts with cgh-1. Interacts with ife-1 and oma-1. In terms of tissue distribution, in the embryo, significantly enriched in the germ cell lineage.

It is found in the cytoplasm. Involved in translational repression of multiple mRNAs in the distal gonad. Recruited to the 3' untranslated region (UTR) of zif-1 by oma-1 and is required for translational repression of zif-1. May also be involved in translational repression of mei-1 through recruitment to the mei-1 3' UTR by oma-1. Required for oogenesis but not spermatogenesis, for P granule formation and for the localization of car-1 and cgh-1 to P granules. Required for normal spindle orientation in early embryos. In Caenorhabditis elegans, this protein is Translational repressor ifet-1.